Consider the following 86-residue polypeptide: Protein GOLVEN 1 (86 aa).

The N-terminal stretch at 1–29 is a signal peptide; it reads MSCSLRSGLVIVFCFILLLLSSNVGCASA. Residues 30-70 constitute a propeptide that is removed on maturation; the sequence is ARRLRSHKHHHHKVASLDVFNGGERRRALGGVETGEEVVVM. Tyr72 bears the Sulfotyrosine mark. Hydroxyproline is present on Pro80. Residues 84-86 constitute a propeptide that is removed on maturation; sequence EKS.

Belongs to the RGF family. In terms of assembly, binds to LRR receptor-like serine/threonine-protein kinases to trigger their dimerization with SERK proteins and subsequent signaling. Expressed in stems, hypocotyls, cotyledons, leaves, flowers, shoot apex, siliques, stamens and petals.

It is found in the endoplasmic reticulum. The protein localises to the secreted. Signaling peptide (root growth factor) that regulates the pattern of root growth and lateral root development by modulating the length and the number of cortical cells in the root apical meristem (RAM), and the anticlinal asymmetric cell divisions in lateral root initiation cells. Also involved in the regulation of hypocotyl bending and root gravitropism in a PIN2-traffic dependent manner, thus influencing the formation of auxin gradients. Maintains the postembryonic root stem cell niche. The protein is Protein GOLVEN 1 of Arabidopsis thaliana (Mouse-ear cress).